Reading from the N-terminus, the 223-residue chain is Charged multivesicular body protein 3 (223 aa).

Glycine 2 carries the N-myristoyl glycine lipid modification. An intramolecular interaction with C-terminus region spans residues 2-113 (GLFGKTQEKP…LQKSTEVMKA (112 aa)). Residues 22–54 (KIRKEMRVVDRQIRDIQREEEKVKRSVKDAAKK) adopt a coiled-coil conformation. Important for autoinhibitory function stretches follow at residues 59-64 (VCVVLA) and 168-169 (IL). Positions 149-223 (ESMDDQEEME…MQSRLATLRS (75 aa)) form a coiled coil. The segment at 151 to 221 (MDDQEEMEEA…EAMQSRLATL (71 aa)) is intramolecular interaction with N-terminus. Positions 151–223 (MDDQEEMEEA…MQSRLATLRS (73 aa)) are interaction with VPS4A. Lysine 179 is covalently cross-linked (Glycyl lysine isopeptide (Lys-Gly) (interchain with G-Cter in ubiquitin)). Residues 180–223 (APSKVTDALPEPEPAGAMAASEGDEEDDEEDLEAMQSRLATLRS) are disordered. 3 interaction with STAMBP regions span residues 196–223 (AMAASEGDEEDDEEDLEAMQSRLATLRS), 204–208 (EEDDE), and 222–223 (RS). The residue at position 200 (serine 200) is a Phosphoserine. The short motif at 201–212 (EGDEEDDEEDLE) is the MIT-interacting motif element. The span at 201–212 (EGDEEDDEEDLE) shows a compositional bias: acidic residues.

Belongs to the SNF7 family. Probable core component of the endosomal sorting required for transport complex III (ESCRT-III). ESCRT-III components are thought to multimerize to form a flat lattice on the perimeter membrane of the endosome. Several assembly forms of ESCRT-III may exist that interact and act sequentially. Forms a metastable monomer in solution; its core structure (without part of the putative autoinhibitory C-terminal acidic region) oligomerizes into a flat lattice via two different dimerization interfaces. In vitro, heteromerizes with CHMP2A (but not CHMP4) to form helical tubular structures that expose membrane-interacting sites on the outside whereas VPS4B can associate on the inside of the tubule. May interact with IGFBP7; the relevance of such interaction however remains unclear. Interacts with CHMP2A. Interacts with CHMP4A; the interaction requires the release of CHMP4A autoinhibition. Interacts with VPS4A. Interacts with STAMBP; the interaction appears to relieve the autoinhibition of CHMP3. Interacts with VTA1.

The protein resides in the cytoplasm. It localises to the cytosol. It is found in the membrane. The protein localises to the endosome. Its subcellular location is the late endosome membrane. Functionally, probable core component of the endosomal sorting required for transport complex III (ESCRT-III) which is involved in multivesicular bodies (MVBs) formation and sorting of endosomal cargo proteins into MVBs. MVBs contain intraluminal vesicles (ILVs) that are generated by invagination and scission from the limiting membrane of the endosome and mostly are delivered to lysosomes enabling degradation of membrane proteins, such as stimulated growth factor receptors, lysosomal enzymes and lipids. The MVB pathway appears to require the sequential function of ESCRT-O, -I,-II and -III complexes. ESCRT-III proteins mostly dissociate from the invaginating membrane before the ILV is released. The ESCRT machinery also functions in topologically equivalent membrane fission events, such as the terminal stages of cytokinesis. ESCRT-III proteins are believed to mediate the necessary vesicle extrusion and/or membrane fission activities, possibly in conjunction with the AAA ATPase VPS4. Selectively binds to phosphatidylinositol 3,5-bisphosphate PtdIns(3,5)P2 and PtdIns(3,4)P2 in preference to other phosphoinositides tested. Involved in late stages of cytokinesis. Plays a role in endosomal sorting/trafficking of EGF receptor. The polypeptide is Charged multivesicular body protein 3 (Chmp3) (Rattus norvegicus (Rat)).